The chain runs to 418 residues: MWGILLKSSNKSCSRLWKPILTQYYSMTSTATDSPLKYYDIGLNLTDPMFHGIYNGKQYHPADYVKLLERAAQRHVKNALVTGSSIAESQSAIELVSSVKDLSPLKLYHTIGVHPCCVNEFADASQGDKASASIDNPSMDEAYNESLYAKVISNPSFAQGKLKELYDLMNQQAKPHDTSFRSIGEIGLDYDRFHYSSKEMQKVFFEEQLKISCLNDKLSSYPLFLHMRSACDDFVQILERFIAGFTDERDTFQLQKLGASSSSGFYKFHPDRKLVVHSFTGSAIDLQKLLNLSPNIFIGVNGCSLRTEENLAVVKQIPTERLLLETDAPWCEIKRTHASFQYLAKYQEVRDFEYPAFKSVKKNKLADKLNAEELYMVKGRNEPCNMEQVAIVVSEVKDVDLATLIDTTWKTTCKIFGE.

Residues Glu185, His226, His277, and Asp327 each coordinate a divalent metal cation.

Belongs to the metallo-dependent hydrolases superfamily. TatD-type hydrolase family. Requires Mg(2+) as cofactor.

It is found in the cytoplasm. In terms of biological role, has both endo- and exonuclease activities. Incises double-stranded DNA without obvious specificity via its endonuclease activity and excises the DNA from the 3'-to 5'-end by its exonuclease activity. May have a role in apoptosis. In Saccharomyces cerevisiae (strain ATCC 204508 / S288c) (Baker's yeast), this protein is Deoxyribonuclease Tat-D.